A 329-amino-acid chain; its full sequence is Ketol-acid reductoisomerase (NADP(+)) (329 aa).

One can recognise a KARI N-terminal Rossmann domain in the interval 2–182 (VEIYYDDDAS…GGTRAGALRT (181 aa)). Residues 25–28 (YGSQ), Ser51, and Ser53 each bind NADP(+). His108 is a catalytic residue. Gly134 provides a ligand contact to NADP(+). Residues 183 to 328 (TFTEETETDL…AKLRPMMSWI (146 aa)) enclose the KARI C-terminal knotted domain. Mg(2+) contacts are provided by Asp191, Glu195, Glu227, and Glu231. Ser252 contacts substrate.

Belongs to the ketol-acid reductoisomerase family. Requires Mg(2+) as cofactor.

It catalyses the reaction (2R)-2,3-dihydroxy-3-methylbutanoate + NADP(+) = (2S)-2-acetolactate + NADPH + H(+). The enzyme catalyses (2R,3R)-2,3-dihydroxy-3-methylpentanoate + NADP(+) = (S)-2-ethyl-2-hydroxy-3-oxobutanoate + NADPH + H(+). It functions in the pathway amino-acid biosynthesis; L-isoleucine biosynthesis; L-isoleucine from 2-oxobutanoate: step 2/4. It participates in amino-acid biosynthesis; L-valine biosynthesis; L-valine from pyruvate: step 2/4. Functionally, involved in the biosynthesis of branched-chain amino acids (BCAA). Catalyzes an alkyl-migration followed by a ketol-acid reduction of (S)-2-acetolactate (S2AL) to yield (R)-2,3-dihydroxy-isovalerate. In the isomerase reaction, S2AL is rearranged via a Mg-dependent methyl migration to produce 3-hydroxy-3-methyl-2-ketobutyrate (HMKB). In the reductase reaction, this 2-ketoacid undergoes a metal-dependent reduction by NADPH to yield (R)-2,3-dihydroxy-isovalerate. This Frankia casuarinae (strain DSM 45818 / CECT 9043 / HFP020203 / CcI3) protein is Ketol-acid reductoisomerase (NADP(+)).